Here is a 364-residue protein sequence, read N- to C-terminus: Tripartite motif-containing protein 54 (364 aa).

The RING-type zinc finger occupies 26–82; it reads CPICLEMFSKPVVILPCQHNLCRKCANDVFQASNPLWQSRGSTTVSSGGRFRCPSCR. The B box-type zinc-finger motif lies at 121 to 163; sequence EQHLMCEEHEDEKINIYCLSCEVPTCSLCKVFGAHKDCEVAPL. Zn(2+)-binding residues include Cys126, His129, Cys149, and His155. A mediates microtubule-binding and homooligomerization region spans residues 168-211; that stretch reads KRQKSELSDGIAMLVAGNDRVQAVITQMEEVCQTIEDNSRRQKQ. Positions 194–252 form a coiled coil; it reads QMEEVCQTIEDNSRRQKQLLNQKFETLCAVLEERKGELLQALARVQEEKLQRVRSLIRQ. A COS domain is found at 271–329; it reads MEEPQMALYLQQAKELINKVGAMSKVELAGRPEPGYESMEQFSVIVEHVAEMLRTIDFQ. The disordered stretch occupies residues 328 to 364; that stretch reads FQPGASGDEEDDEVTLDGEEGNTGLEEERLDGPEGLH. Residues 334 to 347 are compositionally biased toward acidic residues; that stretch reads GDEEDDEVTLDGEE. The span at 353 to 364 shows a compositional bias: basic and acidic residues; that stretch reads EEERLDGPEGLH.

Homooligomer and heterooligomer. Interacts with TRIM63 and probably with TRIM55. Interacts with tubulin.

It localises to the cytoplasm. It is found in the cytoskeleton. The protein localises to the myofibril. The protein resides in the sarcomere. Its subcellular location is the z line. May bind and stabilize microtubules during myotubes formation. In Rattus norvegicus (Rat), this protein is Tripartite motif-containing protein 54 (Trim54).